Consider the following 255-residue polypeptide: MSIKVIVAGFKGRMGSTAVDMIKNDSELELAALLDPFAAEKEIDGVPVFTDKSDLVGLDAEVWVDFTIPKVAYENTHFALENGFRPVVGTTGFTQEQIADLMTLSADKKLGGLIAPNFAIGAVLLMEFAAKASKYFPDLEIIELHHDKKKDAPSGTAVKTAELIREARAYKKQGAADEEETLVGARGAEFDGFRIHSVRLPGLVAHQEVIFGAQGEGLTLRHDSYDRISFMSGVNLGIKEVVQREQLVYGLEHLL.

NAD(+) is bound by residues 9 to 14, 89 to 91, and 115 to 118; these read GFKGRM, GTT, and APNF. Histidine 145 (proton donor/acceptor) is an active-site residue. (S)-2,3,4,5-tetrahydrodipicolinate is bound at residue histidine 146. Lysine 149 functions as the Proton donor in the catalytic mechanism. 155–156 contacts (S)-2,3,4,5-tetrahydrodipicolinate; it reads GT.

This sequence belongs to the DapB family.

Its subcellular location is the cytoplasm. The catalysed reaction is (S)-2,3,4,5-tetrahydrodipicolinate + NAD(+) + H2O = (2S,4S)-4-hydroxy-2,3,4,5-tetrahydrodipicolinate + NADH + H(+). It carries out the reaction (S)-2,3,4,5-tetrahydrodipicolinate + NADP(+) + H2O = (2S,4S)-4-hydroxy-2,3,4,5-tetrahydrodipicolinate + NADPH + H(+). It participates in amino-acid biosynthesis; L-lysine biosynthesis via DAP pathway; (S)-tetrahydrodipicolinate from L-aspartate: step 4/4. Its function is as follows. Catalyzes the conversion of 4-hydroxy-tetrahydrodipicolinate (HTPA) to tetrahydrodipicolinate. This chain is 4-hydroxy-tetrahydrodipicolinate reductase, found in Streptococcus mutans serotype c (strain ATCC 700610 / UA159).